Reading from the N-terminus, the 434-residue chain is Chaperone SurA (434 aa).

The first 22 residues, 1-22 (MKPSKHLIFALFALAISQPTMA), serve as a signal peptide directing secretion. 2 PpiC domains span residues 173–274 (DVEY…KIMD) and 283–383 (IEEV…QLEE).

It is found in the periplasm. It catalyses the reaction [protein]-peptidylproline (omega=180) = [protein]-peptidylproline (omega=0). Functionally, chaperone involved in the correct folding and assembly of outer membrane proteins. Recognizes specific patterns of aromatic residues and the orientation of their side chains, which are found more frequently in integral outer membrane proteins. May act in both early periplasmic and late outer membrane-associated steps of protein maturation. The sequence is that of Chaperone SurA from Shewanella sp. (strain MR-4).